We begin with the raw amino-acid sequence, 387 residues long: Small ribosomal subunit protein mS31 (387 aa).

A mitochondrion-targeting transit peptide spans methionine 1–serine 56. 2 disordered regions span residues serine 59–lysine 83 and lysine 203–serine 228. Polar residues-rich tracts occupy residues valine 66–alanine 76 and methionine 207–isoleucine 217.

The protein belongs to the mitochondrion-specific ribosomal protein mS31 family. In terms of assembly, component of the mitochondrial ribosome small subunit (28S) which comprises a 12S rRNA and about 30 distinct proteins.

It localises to the mitochondrion. This Rattus norvegicus (Rat) protein is Small ribosomal subunit protein mS31 (Mrps31).